The following is a 261-amino-acid chain: Thiazole synthase (261 aa).

The active-site Schiff-base intermediate with DXP is the lysine 98. Residues glycine 159, 185 to 186 (AG), and 207 to 208 (AS) contribute to the 1-deoxy-D-xylulose 5-phosphate site.

The protein belongs to the ThiG family. As to quaternary structure, homotetramer. Forms heterodimers with either ThiH or ThiS.

It is found in the cytoplasm. It carries out the reaction [ThiS sulfur-carrier protein]-C-terminal-Gly-aminoethanethioate + 2-iminoacetate + 1-deoxy-D-xylulose 5-phosphate = [ThiS sulfur-carrier protein]-C-terminal Gly-Gly + 2-[(2R,5Z)-2-carboxy-4-methylthiazol-5(2H)-ylidene]ethyl phosphate + 2 H2O + H(+). It participates in cofactor biosynthesis; thiamine diphosphate biosynthesis. Its function is as follows. Catalyzes the rearrangement of 1-deoxy-D-xylulose 5-phosphate (DXP) to produce the thiazole phosphate moiety of thiamine. Sulfur is provided by the thiocarboxylate moiety of the carrier protein ThiS. In vitro, sulfur can be provided by H(2)S. The chain is Thiazole synthase from Mycobacterium leprae (strain Br4923).